A 160-amino-acid polypeptide reads, in one-letter code: Nucleotide-binding protein BAV0791 (160 aa).

It belongs to the YajQ family.

In terms of biological role, nucleotide-binding protein. This is Nucleotide-binding protein BAV0791 from Bordetella avium (strain 197N).